The sequence spans 556 residues: Arginine--tRNA ligase (556 aa).

Residues 129–139 (ANPTGPLHVGH) carry the 'HIGH' region motif.

Belongs to the class-I aminoacyl-tRNA synthetase family. Monomer.

The protein resides in the cytoplasm. It carries out the reaction tRNA(Arg) + L-arginine + ATP = L-arginyl-tRNA(Arg) + AMP + diphosphate. The protein is Arginine--tRNA ligase of Desulfosudis oleivorans (strain DSM 6200 / JCM 39069 / Hxd3) (Desulfococcus oleovorans).